Consider the following 310-residue polypeptide: NAD kinase 1 (310 aa).

Aspartate 68 acts as the Proton acceptor in catalysis. Residues 68–69, 145–146, arginine 156, histidine 175, and aspartate 177 each bind NAD(+); these read DG and NE.

Belongs to the NAD kinase family. A divalent metal cation serves as cofactor.

It localises to the cytoplasm. The catalysed reaction is NAD(+) + ATP = ADP + NADP(+) + H(+). Functionally, involved in the regulation of the intracellular balance of NAD and NADP, and is a key enzyme in the biosynthesis of NADP. Catalyzes specifically the phosphorylation on 2'-hydroxyl of the adenosine moiety of NAD to yield NADP. This chain is NAD kinase 1, found in Gloeobacter violaceus (strain ATCC 29082 / PCC 7421).